We begin with the raw amino-acid sequence, 95 residues long: Ribonuclease P protein component 1 (95 aa).

This sequence belongs to the eukaryotic/archaeal RNase P protein component 1 family. As to quaternary structure, consists of a catalytic RNA component and at least 4 protein subunits. Forms a subcomplex with Rnp4 which stimulates the catalytic RNA.

It localises to the cytoplasm. It catalyses the reaction Endonucleolytic cleavage of RNA, removing 5'-extranucleotides from tRNA precursor.. Its function is as follows. Part of ribonuclease P, a protein complex that generates mature tRNA molecules by cleaving their 5'-ends. The chain is Ribonuclease P protein component 1 from Methanocaldococcus jannaschii (strain ATCC 43067 / DSM 2661 / JAL-1 / JCM 10045 / NBRC 100440) (Methanococcus jannaschii).